A 112-amino-acid polypeptide reads, in one-letter code: uncharacterized protein (112 aa).

A helical membrane pass occupies residues 89-106; sequence TLYVLVIVGLTILCFLLV.

It belongs to the IIV-6 466R family.

It is found in the membrane. This is an uncharacterized protein from Aedes vexans (Inland floodwater mosquito).